The chain runs to 753 residues: 5-methyltetrahydropteroyltriglutamate--homocysteine methyltransferase (753 aa).

5-methyltetrahydropteroyltri-L-glutamate is bound by residues 17–20 (RELK) and K117. L-homocysteine contacts are provided by residues 431 to 433 (IGS) and E484. Residues 431-433 (IGS) and E484 contribute to the L-methionine site. Residues 515 to 516 (RC) and W561 contribute to the 5-methyltetrahydropteroyltri-L-glutamate site. L-homocysteine is bound at residue D599. An L-methionine-binding site is contributed by D599. E605 contributes to the 5-methyltetrahydropteroyltri-L-glutamate binding site. Residues H641, C643, and E665 each contribute to the Zn(2+) site. Residue H694 is the Proton donor of the active site. C726 contacts Zn(2+).

This sequence belongs to the vitamin-B12 independent methionine synthase family. It depends on Zn(2+) as a cofactor.

It catalyses the reaction 5-methyltetrahydropteroyltri-L-glutamate + L-homocysteine = tetrahydropteroyltri-L-glutamate + L-methionine. It participates in amino-acid biosynthesis; L-methionine biosynthesis via de novo pathway; L-methionine from L-homocysteine (MetE route): step 1/1. Its function is as follows. Catalyzes the transfer of a methyl group from 5-methyltetrahydrofolate to homocysteine resulting in methionine formation. This Shigella sonnei (strain Ss046) protein is 5-methyltetrahydropteroyltriglutamate--homocysteine methyltransferase.